The primary structure comprises 360 residues: Putative transcription factor A494R (360 aa).

The segment at 153–175 (CTCGGQMELWVNSTQSDLVCNEC) is a zinc-finger region.

This sequence belongs to the nucleo-cytoplasmic large DNA viruses (NCLDVs) VLTF-3 family.

Functionally, putative transcription factor. In Paramecium bursaria Chlorella virus 1 (PBCV-1), this protein is Putative transcription factor A494R.